Consider the following 211-residue polypeptide: Putative hydrolase SMU_367 (211 aa).

Positions M1–A29 are cleaved as a signal peptide. Residues D30 to V74 enclose the LysM domain. Residues S77 to N101 form a disordered region. The span at A78 to N101 shows a compositional bias: low complexity. Residues A85–Y209 enclose the Peptidase C51 domain.

This is Putative hydrolase SMU_367 from Streptococcus mutans serotype c (strain ATCC 700610 / UA159).